A 101-amino-acid polypeptide reads, in one-letter code: DNA-binding protein Fis (101 aa).

The segment at residues Gln-77–Lys-96 is a DNA-binding region (H-T-H motif).

The protein belongs to the transcriptional regulatory Fis family. In terms of assembly, homodimer.

Activates ribosomal RNA transcription. Plays a direct role in upstream activation of rRNA promoters. The polypeptide is DNA-binding protein Fis (Shewanella frigidimarina (strain NCIMB 400)).